Consider the following 306-residue polypeptide: N-acetylmuramic acid 6-phosphate etherase (306 aa).

Positions 55 to 218 (IVPRMKKGGR…STGVMIKLGK (164 aa)) constitute an SIS domain. Residue glutamate 83 is the Proton donor of the active site. The active site involves glutamate 114.

Belongs to the GCKR-like family. MurNAc-6-P etherase subfamily. Homodimer.

It catalyses the reaction N-acetyl-D-muramate 6-phosphate + H2O = N-acetyl-D-glucosamine 6-phosphate + (R)-lactate. Its pathway is amino-sugar metabolism; N-acetylmuramate degradation. Its function is as follows. Specifically catalyzes the cleavage of the D-lactyl ether substituent of MurNAc 6-phosphate, producing GlcNAc 6-phosphate and D-lactate. This is N-acetylmuramic acid 6-phosphate etherase from Caldanaerobacter subterraneus subsp. tengcongensis (strain DSM 15242 / JCM 11007 / NBRC 100824 / MB4) (Thermoanaerobacter tengcongensis).